The sequence spans 775 residues: Putative late blight resistance protein homolog R1A-3 (775 aa).

Residues 16 to 39 (PRMNEEIVGFEDVIENLRKKLLSE) are a coiled coil. An NB-ARC domain is found at 17–237 (RMNEEIVGFE…LSEMEKEVEC (221 aa)). 50-57 (GMPGLGKT) contacts ATP. The HMA domain maps to 711 to 775 (IKKMILQFDI…VGKLIDSGML (65 aa)).

The protein belongs to the disease resistance NB-LRR family.

It is found in the cytoplasm. The protein localises to the membrane. Confers resistance to late blight (Phytophthora infestans) races carrying the avirulence gene Avr1. Resistance proteins guard the plant against pathogens that contain an appropriate avirulence protein via an indirect interaction with this avirulence protein. That triggers a defense system including the hypersensitive response, which restricts the pathogen growth. The protein is Putative late blight resistance protein homolog R1A-3 (R1A-3) of Solanum demissum (Wild potato).